Reading from the N-terminus, the 289-residue chain is Diaminopimelate epimerase (289 aa).

2 residues coordinate substrate: Asn-11 and Asn-78. Residue Cys-87 is the Proton donor of the active site. Substrate contacts are provided by residues 88–89 (GN), Asn-163, Asn-199, and 217–218 (ER). Catalysis depends on Cys-226, which acts as the Proton acceptor. Residue 227 to 228 (GT) participates in substrate binding.

This sequence belongs to the diaminopimelate epimerase family. In terms of assembly, homodimer.

The protein localises to the cytoplasm. It catalyses the reaction (2S,6S)-2,6-diaminopimelate = meso-2,6-diaminopimelate. It functions in the pathway amino-acid biosynthesis; L-lysine biosynthesis via DAP pathway; DL-2,6-diaminopimelate from LL-2,6-diaminopimelate: step 1/1. Its function is as follows. Catalyzes the stereoinversion of LL-2,6-diaminopimelate (L,L-DAP) to meso-diaminopimelate (meso-DAP), a precursor of L-lysine and an essential component of the bacterial peptidoglycan. This is Diaminopimelate epimerase from Mycolicibacterium gilvum (strain PYR-GCK) (Mycobacterium gilvum (strain PYR-GCK)).